The following is a 230-amino-acid chain: Fibrillarin-like rRNA/tRNA 2'-O-methyltransferase (230 aa).

S-adenosyl-L-methionine is bound by residues 87–88 (TT), 105–106 (EF), 130–131 (DA), and 150–153 (DVAQ).

This sequence belongs to the methyltransferase superfamily. Fibrillarin family. Interacts with nop5. Component of box C/D small ribonucleoprotein (sRNP) particles that contain rpl7ae, FlpA and nop5, plus a guide RNA.

Its function is as follows. Involved in pre-rRNA and tRNA processing. Utilizes the methyl donor S-adenosyl-L-methionine to catalyze the site-specific 2'-hydroxyl methylation of ribose moieties in rRNA and tRNA. Site specificity is provided by a guide RNA that base pairs with the substrate. Methylation occurs at a characteristic distance from the sequence involved in base pairing with the guide RNA. The polypeptide is Fibrillarin-like rRNA/tRNA 2'-O-methyltransferase (Methanococcus vannielii (strain ATCC 35089 / DSM 1224 / JCM 13029 / OCM 148 / SB)).